The sequence spans 578 residues: Tetratricopeptide repeat protein ttc-39B (578 aa).

TPR repeat units follow at residues 297 to 330 (AIMLFMKARLLLISGDIEAAIHYFNMSIESQDVY), 481 to 514 (CLYYFLKGVALRHLSLHAQAEECFKIVLERESSI), and 522 to 554 (PNATYELAMLRISEQQFMEAQTLLDKARAYKSY).

The polypeptide is Tetratricopeptide repeat protein ttc-39B (Caenorhabditis elegans).